A 164-amino-acid polypeptide reads, in one-letter code: Aspartic proteinase nepenthesin-1 (164 aa).

The region spanning 17 to 164 (YLMXLSIGTP…VSFVSAQCGA (148 aa)) is the Peptidase A1 domain. The active site involves aspartate 35. N-linked (GlcNAc...) asparagine glycosylation is present at asparagine 93.

It belongs to the peptidase A1 family. In terms of tissue distribution, parenchymal cells surrounding the secretory glands.

The protein resides in the secreted. The enzyme catalyses Similar to pepsin, but also cleaves on either side of Asp and at Lys-|-Arg.. Inhibited by pepstatin and by diazoacetyl-D,L-norleucine methyl ester (DAN) in the presence of Cu(2+) ions. In terms of biological role, extracellular proteinase found in the pitcher fluid of carnivorous plants. Digest prey for nitrogen uptake. This is Aspartic proteinase nepenthesin-1 from Nepenthes distillatoria (Pitcher plant).